Here is a 228-residue protein sequence, read N- to C-terminus: Probable GTP-binding protein EngB (228 aa).

Positions 48–222 constitute an EngB-type G domain; sequence YGLEVAFVGY…QFVLNNWFSS (175 aa). GTP-binding positions include 56–63, 83–87, 101–104, 168–171, and 201–203; these read GYSNSGKS, GRTRL, DFPG, NKMD, and FSS. Mg(2+) contacts are provided by Ser63 and Thr85.

This sequence belongs to the TRAFAC class TrmE-Era-EngA-EngB-Septin-like GTPase superfamily. EngB GTPase family. The cofactor is Mg(2+).

Necessary for normal cell division and for the maintenance of normal septation. The protein is Probable GTP-binding protein EngB of Buchnera aphidicola subsp. Baizongia pistaciae (strain Bp).